Reading from the N-terminus, the 535-residue chain is Probable serine/threonine protein phosphatase 2A regulatory subunit B''delta (535 aa).

The tract at residues S67–R104 is disordered. 2 EF-hand domains span residues V174–L209 and S387–R422. Ca(2+) is bound by residues D400, D402, N404, and E411.

As to quaternary structure, PP2A consists of a common heterodimeric core enzyme, composed of a 36 kDa catalytic subunit (subunit C) and a 65 kDa constant regulatory subunit (PR65 or subunit A), that associates with a variety of regulatory subunits. Proteins that associate with the core dimer include three families of regulatory subunits B (the R2/B/PR55/B55, R3/B''/PR72/PR130/PR59 and R5/B'/B56 families) and cell signaling molecules.

In terms of biological role, probable regulatory subunit of type 2A protein phosphatase. In Arabidopsis thaliana (Mouse-ear cress), this protein is Probable serine/threonine protein phosphatase 2A regulatory subunit B''delta (B''DELTA).